The chain runs to 79 residues: D-alanyl carrier protein (79 aa).

The Carrier domain maps to 1–77 (MDVKETILNI…KIISGVVELM (77 aa)). At S35 the chain carries O-(pantetheine 4'-phosphoryl)serine.

It belongs to the DltC family. 4'-phosphopantetheine is transferred from CoA to a specific serine of apo-DCP.

It is found in the cytoplasm. It functions in the pathway cell wall biogenesis; lipoteichoic acid biosynthesis. Its function is as follows. Carrier protein involved in the D-alanylation of lipoteichoic acid (LTA). The loading of thioester-linked D-alanine onto DltC is catalyzed by D-alanine--D-alanyl carrier protein ligase DltA. The DltC-carried D-alanyl group is further transferred to cell membrane phosphatidylglycerol (PG) by forming an ester bond, probably catalyzed by DltD. D-alanylation of LTA plays an important role in modulating the properties of the cell wall in Gram-positive bacteria, influencing the net charge of the cell wall. The sequence is that of D-alanyl carrier protein from Streptococcus suis (strain 05ZYH33).